A 306-amino-acid chain; its full sequence is MYSQPELSISIAGLRLQRPVGNASGILGWEPREARLVEEGGGGFFVAKSVTYQPRKGYPQPHLYPVAGGIVNAVGLANPGFREASKMLAQTVEEASIPVIASIAGGAPGEWVEMASTLEEAGVSAVELNLSCPHFAGGGLELGQDPAAVASVVSAVASTLRIPVIAKLGYSDRLVDAASKALEAGARGLTLINSMRAMKIDVYAKKPVLGNRVGGLSGKPIHPIAVRAVYEVYGETRADIFAAGGVESWEDAVEFYLAGAKAVQVGAAFITIGPHVLRSIVEGVRRYLWVEGFRSLQDIVGYAHRA.

FMN is bound by residues Ser-24 and 48–49 (KS). Substrate is bound by residues Lys-48, 72 to 76 (NAVGL), and Asn-129. An FMN-binding site is contributed by Asn-129. Cys-132 serves as the catalytic Nucleophile. FMN contacts are provided by Lys-167 and Ile-192. 193–194 (NS) serves as a coordination point for substrate. FMN contacts are provided by residues Gly-218 and 244–245 (GG).

This sequence belongs to the dihydroorotate dehydrogenase family. Type 1 subfamily. Homodimer. FMN serves as cofactor.

The protein resides in the cytoplasm. The enzyme catalyses (S)-dihydroorotate + fumarate = orotate + succinate. It functions in the pathway pyrimidine metabolism; UMP biosynthesis via de novo pathway. Catalyzes the conversion of dihydroorotate to orotate with fumarate as the electron acceptor. The protein is Putative dihydroorotate dehydrogenase A (fumarate) (pyrD) of Aeropyrum pernix (strain ATCC 700893 / DSM 11879 / JCM 9820 / NBRC 100138 / K1).